A 1023-amino-acid chain; its full sequence is NLR family CARD domain-containing protein 4 (1023 aa).

A CARD domain is found at 1–88 (MNFIKENSQA…PVYQDLTGHS (88 aa)). The tract at residues 95–298 (EEDLDVLAQS…HVGALTVEVG (204 aa)) is nucleotide-binding domain (NBD). The region spanning 163 to 476 (SPCLIEGESG…VSKGNSYLKK (314 aa)) is the NACHT domain. An ATP-binding site is contributed by 169–176 (GESGKGKS). The segment at 356–463 (AHTQTMLFQT…RLSSLLKSRE (108 aa)) is winged-helix domain (WHD). The residue at position 533 (S533) is a Phosphoserine. LRR repeat units follow at residues 578 to 598 (FFQG…LFDF), 655 to 678 (MQKF…DIKY), 734 to 757 (VTDL…LADS), 761 to 784 (LKNL…SLAE), 786 to 811 (LRNL…DYIV), 823 to 846 (EMKL…LHNL), 847 to 869 (VKLS…ALQG), 877 to 901 (LEQL…LLKQ), 910 to 932 (KLGL…FLEM), 935 to 962 (LRDL…VFEN), 964 to 984 (KQLV…ALVR), and 998 to 1020 (EARL…TFKL).

As to quaternary structure, homooligomer; homooligomerizes following activation of Naip proteins by pathogenic proteins such as S.typhimurium (Salmonella) flagellin or PrgJ. Component of the NLRC4 inflammasome, at least composed of NLRC4, caspase-1 (CASP1) and some NAIP family member. Interacts with EIF2AK2/PKR. Phosphorylated at Ser-533 following infection of macrophages with S.typhimurium (Salmonella). Phosphorylation is essential for NLRC4 inflammasome function to promote caspase-1 activation and pyroptosis. PRKCD phosphorylates Ser-533 in vitro.

The protein resides in the cytoplasm. The protein localises to the cytosol. Its function is as follows. Key component of inflammasomes that indirectly senses specific proteins from pathogenic bacteria and fungi and responds by assembling an inflammasome complex that promotes caspase-1 activation, cytokine production and macrophage pyroptosis. The NLRC4 inflammasome is activated as part of the innate immune response to a range of intracellular bacteria. The protein is NLR family CARD domain-containing protein 4 (Nlrc4) of Rattus norvegicus (Rat).